The chain runs to 339 residues: Phenylalanine--tRNA ligase alpha subunit (339 aa).

E254 serves as a coordination point for Mg(2+).

This sequence belongs to the class-II aminoacyl-tRNA synthetase family. Phe-tRNA synthetase alpha subunit type 1 subfamily. In terms of assembly, tetramer of two alpha and two beta subunits. Mg(2+) serves as cofactor.

It localises to the cytoplasm. The enzyme catalyses tRNA(Phe) + L-phenylalanine + ATP = L-phenylalanyl-tRNA(Phe) + AMP + diphosphate + H(+). The sequence is that of Phenylalanine--tRNA ligase alpha subunit from Caldanaerobacter subterraneus subsp. tengcongensis (strain DSM 15242 / JCM 11007 / NBRC 100824 / MB4) (Thermoanaerobacter tengcongensis).